The primary structure comprises 870 residues: Protein RRP6-like 2 (870 aa).

The 3'-5' exonuclease domain occupies 263-428; the sequence is VQEVKDLKEL…YIYDLIKLEL (166 aa). Residues 479 to 559 form the HRDC domain; the sequence is NAAQLAIVAG…RQSMQHYAAF (81 aa). Disordered regions lie at residues 583–605, 649–668, 688–775, and 821–870; these read SEKK…SSQL, GALL…EKVK, TEKV…EDEP, and FGEG…SFKN. Basic and acidic residues-rich tracts occupy residues 720–729 and 821–834; these read SKEDGVKELK and FGEG…KREA. A compositionally biased stretch (polar residues) spans 840-849; it reads KGSTQEQSEF.

It is found in the nucleus. It localises to the nucleolus. The protein localises to the cytoplasm. In terms of biological role, acts as an important epigenetic regulator through multiple silencing mechanisms. Involved in association with RRP6L1 in the silencing of the solo LTR locus. Controls levels of non-coding RNAs (ncRNAs) from the solo LTR locus. Seems to function independently of the RNA-mediated gene silencing (RdDM) pathway. Functions redundantly with RRP6L1 in the regulation of FLC locus. Participates in the maintenance of trimethylated 'Lys-27' (H3K27me3) at FLC locus via the regulation of antisense long non-coding RNAs (lncRNAs) and the regulation of diverse antisense RNAs derived from the FLC locus. Seems not involved in the exosomal RNA degradation. May be involved in poly(A)-mediated RNA degradation. The sequence is that of Protein RRP6-like 2 from Arabidopsis thaliana (Mouse-ear cress).